The sequence spans 75 residues: UPF0270 protein PSEEN1465 (75 aa).

It belongs to the UPF0270 family.

The sequence is that of UPF0270 protein PSEEN1465 from Pseudomonas entomophila (strain L48).